A 491-amino-acid chain; its full sequence is Probable protein phosphatase 2C 6 (491 aa).

A compositionally biased stretch (basic and acidic residues) spans 1-16 (MGLCHSKIDKTTRKET). Residues 1–39 (MGLCHSKIDKTTRKETGATSTATTTVERQSSGRLRRPRD) form a disordered region. Low complexity predominate over residues 17-28 (GATSTATTTVER). The region spanning 64 to 376 (IACLYTQQGK…DDCAVVCLFL (313 aa)) is the PPM-type phosphatase domain. Residues D100, G101, D321, and D367 each contribute to the Mn(2+) site. A disordered region spans residues 391–422 (VNHSHEESTESVTITSSKDADKKEEASTETNE).

This sequence belongs to the PP2C family. Mg(2+) is required as a cofactor. Mn(2+) serves as cofactor.

It catalyses the reaction O-phospho-L-seryl-[protein] + H2O = L-seryl-[protein] + phosphate. The catalysed reaction is O-phospho-L-threonyl-[protein] + H2O = L-threonyl-[protein] + phosphate. This Arabidopsis thaliana (Mouse-ear cress) protein is Probable protein phosphatase 2C 6.